A 303-amino-acid polypeptide reads, in one-letter code: DCN1-like protein 3 (303 aa).

Disordered regions lie at residues 1 to 41 and 62 to 83; these read MGQC…HLSI and EASQ…TGAE. Gly2 carries the N-myristoyl glycine lipid modification. Residues 85–277 form the DCUN1 domain; sequence SSVQRIEELF…LFDTFVEWEM (193 aa). Positions 284-303 are disordered; that stretch reads EETKCIPCSGTDDQSTEGQT. The segment covering 294–303 has biased composition (polar residues); sequence TDDQSTEGQT.

As to quaternary structure, may interact (via the DCUN1 domain) with unneddylated cullins.

It is found in the cell membrane. Its subcellular location is the cytoplasm. The protein localises to the nucleus. It localises to the perinuclear region. Its function is as follows. Contributes to the neddylation of all cullins by transferring NEDD8 from N-terminally acetylated NEDD8-conjugating E2s enzyme to different cullin C-terminal domain-RBX complexes. At the cell membrane, can promote and as well inhibit cullins neddylation. This Xenopus tropicalis (Western clawed frog) protein is DCN1-like protein 3.